The primary structure comprises 761 residues: Pleckstrin homology domain-containing family M member 3 (761 aa).

Residue serine 132 is modified to Phosphoserine. 2 consecutive PH domains span residues 211–308 (NILK…EVVH) and 361–456 (NILK…IAAN). Residues 669–722 (SHVYSCSLCSQKGFICEICNNGEILYPFEDISTSRCESCGAVFHSECKEKSVPC) form a Phorbol-ester/DAG-type zinc finger.

As to quaternary structure, interacts with AKT1.

It is found in the cytoplasm. The protein resides in the golgi apparatus. Its subcellular location is the cell membrane. In terms of biological role, involved in skeletal muscle differentiation. May act as a scaffold protein for AKT1 during muscle differentiation. This is Pleckstrin homology domain-containing family M member 3 from Homo sapiens (Human).